Here is a 402-residue protein sequence, read N- to C-terminus: Flavohemoprotein (402 aa).

One can recognise a Globin domain in the interval 1 to 136; that stretch reads MLSEKTIEIV…IADAFISIEA (136 aa). Residue His85 participates in heme b binding. Residues Tyr95 and Glu135 each act as charge relay system in the active site. The segment at 147-402 is reductase; the sequence is GGWKDFRNFV…EFFGPAASLQ (256 aa). Residues 150-260 enclose the FAD-binding FR-type domain; sequence KDFRNFVVVK…SAPAGDFVLN (111 aa). FAD is bound by residues Tyr188 and 204–207; that span reads RQYS. 273-278 is an NADP(+) binding site; it reads GVGITP. 394 to 397 contacts FAD; it reads FFGP.

This sequence belongs to the globin family. Two-domain flavohemoproteins subfamily. It in the C-terminal section; belongs to the flavoprotein pyridine nucleotide cytochrome reductase family. The cofactor is heme b. FAD is required as a cofactor.

It carries out the reaction 2 nitric oxide + NADPH + 2 O2 = 2 nitrate + NADP(+) + H(+). It catalyses the reaction 2 nitric oxide + NADH + 2 O2 = 2 nitrate + NAD(+) + H(+). Is involved in NO detoxification in an aerobic process, termed nitric oxide dioxygenase (NOD) reaction that utilizes O(2) and NAD(P)H to convert NO to nitrate, which protects the bacterium from various noxious nitrogen compounds. Therefore, plays a central role in the inducible response to nitrosative stress. This chain is Flavohemoprotein, found in Bacillus thuringiensis subsp. konkukian (strain 97-27).